The following is a 323-amino-acid chain: Sphingolipid delta(4)-desaturase DES1 (323 aa).

Glycine 2 is lipidated: N-myristoyl glycine. Helical transmembrane passes span 41–61 and 68–88; these read PNLI…FYIV and WVIF…TLGI. A Histidine box-1 motif is present at residues 89-93; it reads HEIAH. The chain crosses the membrane as a helical span at residues 107–127; sequence WFGMFANLPIGIPYSVSFKSY. The short motif at 128–132 is the Histidine box-2 element; that stretch reads HMDHH. The next 3 membrane-spanning stretches (helical) occupy residues 152 to 172, 184 to 204, and 209 to 229; these read FFCT…FYAF, YLEV…YYFL, and LVYM…SGHF. Positions 259-263 match the Histidine box-3 motif; the sequence is HNEHH. Serine 307 carries the post-translational modification Phosphoserine.

Belongs to the fatty acid desaturase type 1 family. DEGS subfamily. Interacts with RLBP1; the interaction increases synthesis of chromophore-precursors by DEGS1. In terms of processing, myristoylation can target the enzyme to the mitochondria leading to an increase in ceramide levels.

The protein resides in the mitochondrion membrane. It is found in the endoplasmic reticulum membrane. The enzyme catalyses an N-acylsphinganine + 2 Fe(II)-[cytochrome b5] + O2 + 2 H(+) = an N-acylsphing-4-enine + 2 Fe(III)-[cytochrome b5] + 2 H2O. It catalyses the reaction all-trans-retinol = 11-cis-retinol. It carries out the reaction all-trans-retinol = 9-cis-retinol. The catalysed reaction is all-trans-retinol = 13-cis-retinol. The enzyme catalyses 11-cis-retinol = 13-cis-retinol. It catalyses the reaction 11-cis-retinol = 9-cis-retinol. In terms of biological role, has sphingolipid-delta-4-desaturase activity. Converts D-erythro-sphinganine to D-erythro-sphingosine (E-sphing-4-enine). Catalyzes the equilibrium isomerization of retinols. The polypeptide is Sphingolipid delta(4)-desaturase DES1 (DEGS1) (Pongo abelii (Sumatran orangutan)).